The primary structure comprises 689 residues: DNA ligase (689 aa).

NAD(+) is bound by residues 40-44 (DAEYD), 89-90 (SL), and glutamate 121. The active-site N6-AMP-lysine intermediate is the lysine 123. Residues arginine 144, glutamate 179, lysine 295, and lysine 319 each contribute to the NAD(+) site. Cysteine 413, cysteine 416, cysteine 431, and cysteine 437 together coordinate Zn(2+). In terms of domain architecture, BRCT spans 610–689 (REQSSLTGKI…AEWLTLVRDI (80 aa)).

It belongs to the NAD-dependent DNA ligase family. LigA subfamily. Mg(2+) serves as cofactor. The cofactor is Mn(2+).

It carries out the reaction NAD(+) + (deoxyribonucleotide)n-3'-hydroxyl + 5'-phospho-(deoxyribonucleotide)m = (deoxyribonucleotide)n+m + AMP + beta-nicotinamide D-nucleotide.. Its function is as follows. DNA ligase that catalyzes the formation of phosphodiester linkages between 5'-phosphoryl and 3'-hydroxyl groups in double-stranded DNA using NAD as a coenzyme and as the energy source for the reaction. It is essential for DNA replication and repair of damaged DNA. The chain is DNA ligase from Rickettsia bellii (strain OSU 85-389).